The chain runs to 314 residues: Inositol oxygenase 5 (314 aa).

Residues Arg-54 and 112–114 (DES) contribute to the substrate site. Residues His-125, His-150, and Asp-151 each contribute to the Fe cation site. Substrate-binding positions include Lys-154 and 171–172 (GD). 3 residues coordinate Fe cation: His-223, His-249, and Asp-282. A substrate-binding site is contributed by 249–250 (HS).

Belongs to the myo-inositol oxygenase family. The cofactor is Fe cation. Expressed in flowers and siliques.

It is found in the cytoplasm. It carries out the reaction myo-inositol + O2 = D-glucuronate + H2O + H(+). The protein operates within polyol metabolism; myo-inositol degradation into D-glucuronate; D-glucuronate from myo-inositol: step 1/1. Functionally, involved in the biosynthesis of UDP-glucuronic acid (UDP-GlcA), providing nucleotide sugars for cell-wall polymers. May be also involved in plant ascorbate biosynthesis. The polypeptide is Inositol oxygenase 5 (MIOX5) (Arabidopsis thaliana (Mouse-ear cress)).